The chain runs to 385 residues: Glucans biosynthesis protein C (385 aa).

10 helical membrane passes run 17-37 (AWLM…SHTW), 60-80 (MQVF…RYPL), 91-111 (VGIP…IMLQ), 137-157 (ISHL…VWIF), 173-193 (KFSM…YAVI), 212-232 (FIVM…LAFI), 239-259 (LFTT…VAYL), 274-294 (TESV…FSFG), 311-331 (ASLF…AYIT), and 338-358 (WLGF…LYEI).

Belongs to the acyltransferase 3 family. OpgC subfamily.

It localises to the cell membrane. It participates in glycan metabolism; osmoregulated periplasmic glucan (OPG) biosynthesis. In terms of biological role, necessary for the succinyl substitution of periplasmic glucans. Could catalyze the transfer of succinyl residues from the cytoplasmic side of the membrane to the nascent glucan backbones on the periplasmic side of the membrane. This chain is Glucans biosynthesis protein C, found in Escherichia coli O6:K15:H31 (strain 536 / UPEC).